The following is a 138-amino-acid chain: Putative pre-16S rRNA nuclease (138 aa).

This sequence belongs to the YqgF nuclease family.

Its subcellular location is the cytoplasm. In terms of biological role, could be a nuclease involved in processing of the 5'-end of pre-16S rRNA. This chain is Putative pre-16S rRNA nuclease, found in Azobacteroides pseudotrichonymphae genomovar. CFP2.